The following is a 22-amino-acid chain: Unknown protein from spot 168 of 2D-PAGE of etiolated coleoptile (22 aa).

In Zea mays (Maize), this protein is Unknown protein from spot 168 of 2D-PAGE of etiolated coleoptile.